The chain runs to 318 residues: NADH-ubiquinone oxidoreductase chain 1 (318 aa).

A run of 8 helical transmembrane segments spans residues 3–23 (FMNL…LTLL), 69–89 (VLFI…WIPL), 102–122 (ILFM…SGWA), 146–166 (LAII…STLI), 171–191 (HIWL…STLA), 222–242 (LFFL…IILF), 253–273 (ELYT…FLWV), and 294–314 (LPLT…LAGI).

This sequence belongs to the complex I subunit 1 family. As to quaternary structure, core subunit of respiratory chain NADH dehydrogenase (Complex I) which is composed of 45 different subunits.

It is found in the mitochondrion inner membrane. It catalyses the reaction a ubiquinone + NADH + 5 H(+)(in) = a ubiquinol + NAD(+) + 4 H(+)(out). In terms of biological role, core subunit of the mitochondrial membrane respiratory chain NADH dehydrogenase (Complex I) which catalyzes electron transfer from NADH through the respiratory chain, using ubiquinone as an electron acceptor. Essential for the catalytic activity and assembly of complex I. In Cnephaeus nilssonii (Northern bat), this protein is NADH-ubiquinone oxidoreductase chain 1 (MT-ND1).